The primary structure comprises 111 residues: Cornifelin homolog B (111 aa).

The protein belongs to the cornifelin family.

The chain is Cornifelin homolog B (cnfn-b) from Xenopus laevis (African clawed frog).